We begin with the raw amino-acid sequence, 89 residues long: Submaxillary mucin (89 aa).

A disordered region spans residues 1 to 89; the sequence is AGSVGRTAGG…VGGSPVATTL (89 aa). The O-linked (GalNAc...) serine; partial glycan is linked to serine 3. 2 O-linked (GalNAc...) threonine; partial glycosylation sites follow: threonine 7 and threonine 14. Residue serine 15 is glycosylated (O-linked (GalNAc...) serine; partial). An O-linked (GalNAc...) threonine; partial glycan is attached at threonine 23. Serine 25 carries O-linked (GalNAc...) serine; partial glycosylation. The O-linked (GalNAc...) threonine; partial glycan is linked to threonine 27. O-linked (GalNAc...) serine; partial glycosylation is present at serine 29. A glycan (O-linked (GalNAc...) threonine; partial) is linked at threonine 34. Serine 38 carries O-linked (GalNAc...) serine; partial glycosylation. The O-linked (GalNAc...) threonine; partial glycan is linked to threonine 42. Residues serine 47 and serine 49 are each glycosylated (O-linked (GalNAc...) serine; partial). Threonine 50 carries O-linked (GalNAc...) threonine; partial glycosylation. Residue serine 54 is glycosylated (O-linked (GalNAc...) serine; partial). The span at 56–71 shows a compositional bias: low complexity; it reads APGTTLAGRAGTTLGP. Residues threonine 59, threonine 60, threonine 67, and threonine 68 are each glycosylated (O-linked (GalNAc...) threonine; partial). Residues serine 73 and serine 76 are each glycosylated (O-linked (GalNAc...) serine; partial). A glycan (O-linked (GalNAc...) threonine; partial) is linked at threonine 78. O-linked (GalNAc...) serine; partial glycosylation occurs at serine 83.

Heavily O-glycosylated at most but not all Ser and Thr residues. Expressed in the submaxillary salivary gland.

The protein resides in the secreted. The polypeptide is Submaxillary mucin (Canis lupus familiaris (Dog)).